We begin with the raw amino-acid sequence, 545 residues long: Chaperonin GroEL (545 aa).

ATP is bound by residues 29 to 32 (TLGP), Lys50, 86 to 90 (DGTTT), Gly415, and Asp495.

The protein belongs to the chaperonin (HSP60) family. Forms a cylinder of 14 subunits composed of two heptameric rings stacked back-to-back. Interacts with the co-chaperonin GroES.

It is found in the cytoplasm. It carries out the reaction ATP + H2O + a folded polypeptide = ADP + phosphate + an unfolded polypeptide.. In terms of biological role, together with its co-chaperonin GroES, plays an essential role in assisting protein folding. The GroEL-GroES system forms a nano-cage that allows encapsulation of the non-native substrate proteins and provides a physical environment optimized to promote and accelerate protein folding. In Porphyromonas gingivalis (strain ATCC BAA-308 / W83), this protein is Chaperonin GroEL.